The following is a 128-amino-acid chain: Large ribosomal subunit protein bL17 (128 aa).

This sequence belongs to the bacterial ribosomal protein bL17 family. In terms of assembly, part of the 50S ribosomal subunit. Contacts protein L32.

This chain is Large ribosomal subunit protein bL17, found in Proteus mirabilis (strain HI4320).